We begin with the raw amino-acid sequence, 530 residues long: UDP-N-acetylmuramoyl-L-alanyl-D-glutamate--2,6-diaminopimelate ligase (530 aa).

Leucine 52 is a UDP-N-acetyl-alpha-D-muramoyl-L-alanyl-D-glutamate binding site. ATP is bound at residue 139–145 (GTSGKTT). Residues 181–182 (TT), serine 208, and arginine 216 contribute to the UDP-N-acetyl-alpha-D-muramoyl-L-alanyl-D-glutamate site. Lysine 248 is subject to N6-carboxylysine. Meso-2,6-diaminopimelate-binding positions include arginine 410, 434 to 437 (DNPR), glycine 488, and glutamate 492. Residues 434–437 (DNPR) carry the Meso-diaminopimelate recognition motif motif.

Belongs to the MurCDEF family. MurE subfamily. Mg(2+) serves as cofactor. Post-translationally, carboxylation is probably crucial for Mg(2+) binding and, consequently, for the gamma-phosphate positioning of ATP.

Its subcellular location is the cytoplasm. The enzyme catalyses UDP-N-acetyl-alpha-D-muramoyl-L-alanyl-D-glutamate + meso-2,6-diaminopimelate + ATP = UDP-N-acetyl-alpha-D-muramoyl-L-alanyl-gamma-D-glutamyl-meso-2,6-diaminopimelate + ADP + phosphate + H(+). It functions in the pathway cell wall biogenesis; peptidoglycan biosynthesis. Its function is as follows. Catalyzes the addition of meso-diaminopimelic acid to the nucleotide precursor UDP-N-acetylmuramoyl-L-alanyl-D-glutamate (UMAG) in the biosynthesis of bacterial cell-wall peptidoglycan. The polypeptide is UDP-N-acetylmuramoyl-L-alanyl-D-glutamate--2,6-diaminopimelate ligase (Mycobacterium leprae (strain TN)).